A 300-amino-acid polypeptide reads, in one-letter code: 4-diphosphocytidyl-2-C-methyl-D-erythritol kinase (300 aa).

The active site involves lysine 22. 105 to 115 serves as a coordination point for ATP; the sequence is PMGGGLGGGSS. The active site involves aspartate 147.

The protein belongs to the GHMP kinase family. IspE subfamily.

It carries out the reaction 4-CDP-2-C-methyl-D-erythritol + ATP = 4-CDP-2-C-methyl-D-erythritol 2-phosphate + ADP + H(+). The protein operates within isoprenoid biosynthesis; isopentenyl diphosphate biosynthesis via DXP pathway; isopentenyl diphosphate from 1-deoxy-D-xylulose 5-phosphate: step 3/6. In terms of biological role, catalyzes the phosphorylation of the position 2 hydroxy group of 4-diphosphocytidyl-2C-methyl-D-erythritol. This chain is 4-diphosphocytidyl-2-C-methyl-D-erythritol kinase, found in Colwellia psychrerythraea (strain 34H / ATCC BAA-681) (Vibrio psychroerythus).